The following is a 345-amino-acid chain: NADH-quinone oxidoreductase subunit H (345 aa).

Transmembrane regions (helical) follow at residues 15 to 35 (MLLQ…FMVY), 82 to 102 (FVYF…FVVI), 115 to 135 (VGIL…IMGG), 161 to 181 (LGLI…TAIV), 190 to 210 (LLNW…VSAL), 240 to 262 (YLLF…SLLF), 278 to 298 (WWMV…KAIV), and 309 to 329 (IGWK…AILA).

The protein belongs to the complex I subunit 1 family. NDH-1 is composed of at least 14 different subunits, Nqo1 to Nqo14. The complex has a L-shaped structure, with the hydrophobic arm (subunits Nqo7, Nqo8, Nqo10 to Nqo14) embedded in the inner membrane and the hydrophilic peripheral arm (subunits Nqo1 to Nqo6, Nqo9) protruding into the bacterial cytoplasm. The hydrophilic domain contains all the redox centers. NADH-quinone oxidoreductase forms a supercomplex with ubiquinol-cytochrome c reductase complex (complex III or cytochrome b-c1 complex) and cytochrome c oxidase (complex IV), which stabilizes the NADH-quinone oxidoreductase complex.

Its subcellular location is the cell inner membrane. The enzyme catalyses a quinone + NADH + 5 H(+)(in) = a quinol + NAD(+) + 4 H(+)(out). In terms of biological role, NDH-1 shuttles electrons from NADH, via FMN and iron-sulfur (Fe-S) centers, to quinones in the respiratory chain. The immediate electron acceptor for the enzyme in this species is believed to be ubiquinone. Couples the redox reaction to proton translocation (for every two electrons transferred, four hydrogen ions are translocated across the cytoplasmic membrane), and thus conserves the redox energy in a proton gradient. This subunit may bind ubiquinone. The protein is NADH-quinone oxidoreductase subunit H of Paracoccus denitrificans (strain Pd 1222).